The sequence spans 172 residues: NADH-quinone oxidoreductase subunit B (172 aa).

[4Fe-4S] cluster is bound by residues C46, C47, C111, and C141.

It belongs to the complex I 20 kDa subunit family. In terms of assembly, NDH-1 is composed of 14 different subunits. Subunits NuoB, C, D, E, F, and G constitute the peripheral sector of the complex. [4Fe-4S] cluster serves as cofactor.

The protein localises to the cell membrane. The catalysed reaction is a quinone + NADH + 5 H(+)(in) = a quinol + NAD(+) + 4 H(+)(out). Its function is as follows. NDH-1 shuttles electrons from NADH, via FMN and iron-sulfur (Fe-S) centers, to quinones in the respiratory chain. The immediate electron acceptor for the enzyme in this species is believed to be a menaquinone. Couples the redox reaction to proton translocation (for every two electrons transferred, four hydrogen ions are translocated across the cytoplasmic membrane), and thus conserves the redox energy in a proton gradient. In Bacillus mycoides (strain KBAB4) (Bacillus weihenstephanensis), this protein is NADH-quinone oxidoreductase subunit B.